Here is a 150-residue protein sequence, read N- to C-terminus: Large ribosomal subunit protein uL22c (150 aa).

It belongs to the universal ribosomal protein uL22 family. In terms of assembly, part of the 50S ribosomal subunit.

The protein resides in the plastid. Its function is as follows. This protein binds specifically to 23S rRNA. The globular domain of the protein is located near the polypeptide exit tunnel on the outside of the subunit, while an extended beta-hairpin is found that lines the wall of the exit tunnel in the center of the 70S ribosome. The chain is Large ribosomal subunit protein uL22c (rpl22) from Orobanche minor (Small broomrape).